An 887-amino-acid polypeptide reads, in one-letter code: Amyloid-beta-like protein (887 aa).

The signal sequence occupies residues 1 to 27; that stretch reads MCAALRRNLLLRSLWVVLAIGTAQVQA. At 28–813 the chain is on the extracellular side; that stretch reads ASPRWEPQIA…HAAKEGRNVY (786 aa). The segment at 30–133 is GFLD subdomain; the sequence is PRWEPQIAVL…KPFRCLGPFQ (104 aa). The region spanning 30-199 is the E1 domain; the sequence is PRWEPQIAVL…SGVEFVCCPK (170 aa). 6 cysteine pairs are disulfide-bonded: C40–C70, C81–C128, C106–C116, C143–C197, C154–C184, and C168–C196. A cuBD subdomain region spans residues 141–199; it reads EGCLFDHIHNASRCWPFVRWNQTGAAACQERGMQMRSFAMLLPCGISVFSGVEFVCCPK. Residues N150 and N161 are each glycosylated (N-linked (GlcNAc...) asparagine). 2 disordered regions span residues 225 to 365 and 377 to 396; these read NDEL…STPQ and NSGN…QPTS. N-linked (GlcNAc...) asparagine glycosylation is found at N237 and N240. The segment covering 246-267 has biased composition (acidic residues); that stretch reads NEDDLDDEDDLMGDDEEDDMVA. Residues 268-292 show a composition bias toward low complexity; that stretch reads DEAATAGGSPNTGSSGDSNSGSLDD. Positions 293–321 are enriched in acidic residues; it reads INAEYDSGEEGDNYEEDGAGSESEAEVEA. Residues 329–352 are compositionally biased toward low complexity; it reads AKVVSLKSDSSSPSSAPVAPAPEK. The E2 domain occupies 395–597; it reads TSDPYFTHFD…AKIAQLMNDY (203 aa). Residue N574 is glycosylated (N-linked (GlcNAc...) asparagine). Positions 675 to 743 are disordered; the sequence is KSQVAEQQSQ…TEYGEATVSS (69 aa). The span at 681–699 shows a compositional bias: low complexity; the sequence is QQSQPTQSSTQSQAQQQQQ. The helical transmembrane segment at 814–834 threads the bilayer; that stretch reads FTLSFAGIALMAAVFVGVAVA. Over 835 to 887 the chain is Cytoplasmic; the sequence is KWRTSRSPHAQGFIEVDQNVTTHHPIVREEKIVPNMQINGYENPTYKYFEVKE. The YENPXY motif motif lies at 875–880; it reads YENPTY.

The protein belongs to the APP family. Interacts (via the intracellular domain, ICD) with APP-BP1. Expressed in postmitotic neurons in the central and peripheral nervous systems. Within the nervous system, transcripts are not observed in neuroblasts, newly generated neurons and at least one class of presumed glial cells.

It localises to the membrane. In terms of biological role, during development, plays a role in the regulation of the neddylation pathway. Appl and APP-BP1 interact antagonistically during development. In Drosophila melanogaster (Fruit fly), this protein is Amyloid-beta-like protein (Appl).